A 432-amino-acid polypeptide reads, in one-letter code: Glutamate-1-semialdehyde 2,1-aminomutase 2 (432 aa).

The residue at position 268 (lysine 268) is an N6-(pyridoxal phosphate)lysine.

Belongs to the class-III pyridoxal-phosphate-dependent aminotransferase family. HemL subfamily. As to quaternary structure, homodimer. It depends on pyridoxal 5'-phosphate as a cofactor.

Its subcellular location is the cytoplasm. The catalysed reaction is (S)-4-amino-5-oxopentanoate = 5-aminolevulinate. It functions in the pathway porphyrin-containing compound metabolism; protoporphyrin-IX biosynthesis; 5-aminolevulinate from L-glutamyl-tRNA(Glu): step 2/2. In Listeria monocytogenes serovar 1/2a (strain ATCC BAA-679 / EGD-e), this protein is Glutamate-1-semialdehyde 2,1-aminomutase 2.